The following is a 477-amino-acid chain: Cysteine--tRNA ligase (477 aa).

C28 serves as a coordination point for Zn(2+). Positions P30–N40 match the 'HIGH' region motif. Positions 213, 238, and 242 each coordinate Zn(2+). The 'KMSKS' region signature appears at K270–S274. Residue K273 coordinates ATP.

The protein belongs to the class-I aminoacyl-tRNA synthetase family. As to quaternary structure, monomer. Zn(2+) is required as a cofactor.

Its subcellular location is the cytoplasm. It carries out the reaction tRNA(Cys) + L-cysteine + ATP = L-cysteinyl-tRNA(Cys) + AMP + diphosphate. The sequence is that of Cysteine--tRNA ligase (cysS) from Chlamydia trachomatis serovar D (strain ATCC VR-885 / DSM 19411 / UW-3/Cx).